The sequence spans 318 residues: MNQLEQLRQFTTVVADTGDFQLMKQYTPQDATTNPSLILKAVQKPEYRHLLEKAVQDHHGNGGVDAVMDEVLIAFGCEILAIVPGRVSTEVDARLSFDTEASVAKARHLIQLYEQRGIARERVLIKIASTWEGIRAAEILQRDGIRCNMTLLFSLVQAVACAEAGAQLISPFVGRIFDWYKKQAGEQWDAAANGGDNDPGVRSVRQIYDYYKKFGYPTEVMGASFRSTTQILSLAGCDLLTISPELLEQLAAGQGPVAHKLSVDQAQAANIARIAADEPAFRWQLNEDAMATEKLAEGIRLFAADAVKLEKLIGEIAK.

The active-site Schiff-base intermediate with substrate is the K126.

Belongs to the transaldolase family. Type 1 subfamily. Homodimer.

It localises to the cytoplasm. It catalyses the reaction D-sedoheptulose 7-phosphate + D-glyceraldehyde 3-phosphate = D-erythrose 4-phosphate + beta-D-fructose 6-phosphate. It functions in the pathway carbohydrate degradation; pentose phosphate pathway; D-glyceraldehyde 3-phosphate and beta-D-fructose 6-phosphate from D-ribose 5-phosphate and D-xylulose 5-phosphate (non-oxidative stage): step 2/3. In terms of biological role, transaldolase is important for the balance of metabolites in the pentose-phosphate pathway. The chain is Transaldolase from Cupriavidus necator (strain ATCC 17699 / DSM 428 / KCTC 22496 / NCIMB 10442 / H16 / Stanier 337) (Ralstonia eutropha).